Consider the following 101-residue polypeptide: Small ribosomal subunit protein uS14 (101 aa).

The protein belongs to the universal ribosomal protein uS14 family. As to quaternary structure, part of the 30S ribosomal subunit. Contacts proteins S3 and S10.

Functionally, binds 16S rRNA, required for the assembly of 30S particles and may also be responsible for determining the conformation of the 16S rRNA at the A site. This is Small ribosomal subunit protein uS14 from Baumannia cicadellinicola subsp. Homalodisca coagulata.